A 703-amino-acid polypeptide reads, in one-letter code: Serotransferrin (703 aa).

Residues 1-19 form the signal peptide; it reads MDLSLHVALCLGMLALCLA. Transferrin-like domains follow at residues 27 to 341 and 354 to 686; these read VRWC…ALKE and VRWC…SLNK. Disulfide bonds link cysteine 30–cysteine 65 and cysteine 40–cysteine 56. Residues aspartate 80 and tyrosine 112 each coordinate Fe(3+). Disulfide bonds link cysteine 135–cysteine 218, cysteine 180–cysteine 193, and cysteine 246–cysteine 260. Positions 137, 141, 143, and 144 each coordinate hydrogencarbonate. Tyrosine 212 provides a ligand contact to Fe(3+). Histidine 268 provides a ligand contact to Fe(3+). Residues 341-350 are connecting region; that stretch reads EGVKEDDLAA. Disulfide bonds link cysteine 357–cysteine 389 and cysteine 367–cysteine 380. The Fe(3+) site is built by aspartate 404 and tyrosine 443. Intrachain disulfides connect cysteine 414–cysteine 698, cysteine 432–cysteine 659, cysteine 466–cysteine 545, cysteine 490–cysteine 687, cysteine 500–cysteine 514, cysteine 511–cysteine 528, and cysteine 585–cysteine 599. Threonine 468, arginine 472, alanine 474, and glycine 475 together coordinate hydrogencarbonate. Tyrosine 539 is a binding site for Fe(3+). Residue histidine 607 coordinates Fe(3+).

The protein belongs to the transferrin family. In terms of assembly, monomer. Plasma.

It localises to the secreted. Its function is as follows. Transferrins are iron binding transport proteins which can bind two Fe(3+) ions in association with the binding of an anion, usually bicarbonate. It is responsible for the transport of iron from sites of absorption and heme degradation to those of storage and utilization. Serum transferrin may also have a further role in stimulating cell proliferation. In Xenopus tropicalis (Western clawed frog), this protein is Serotransferrin (tf).